The following is a 236-amino-acid chain: MGHRITTQSRGHGGPTYRAPSHRYKAALKHLGRAGETVSYKIIDIEHDPARHTPIALVDVPDGENTYVLVTEGMGIGDVLTWGADAEIRNGNTLPLQEIPTGSSVCNIEAYPNDGGKFVRASGVQATVTDKMEGRVAVRMPSGSTKWFNGQCRATIGIVAGGGRSEKPFVKAGKKYHKMKNTASNWPRVRGFAMNVIDHPFGGGGHQHAGRPKTVSRGTSPGRKVGHIAARRTGRR.

Positions 1–10 (MGHRITTQSR) are enriched in polar residues. Disordered stretches follow at residues 1-20 (MGHR…YRAP) and 202-236 (GGGG…TGRR). A compositionally biased stretch (basic residues) spans 224–236 (KVGHIAARRTGRR).

Belongs to the universal ribosomal protein uL2 family. As to quaternary structure, part of the 50S ribosomal subunit. Forms a bridge to the 30S subunit in the 70S ribosome.

Its function is as follows. One of the primary rRNA binding proteins. Required for association of the 30S and 50S subunits to form the 70S ribosome, for tRNA binding and peptide bond formation. It has been suggested to have peptidyltransferase activity; this is somewhat controversial. Makes several contacts with the 16S rRNA in the 70S ribosome. This is Large ribosomal subunit protein uL2 from Methanospirillum hungatei JF-1 (strain ATCC 27890 / DSM 864 / NBRC 100397 / JF-1).